Consider the following 225-residue polypeptide: Glycerol-3-phosphate acyltransferase (225 aa).

The next 6 helical transmembrane spans lie at 1-21 (MAIW…LGSF), 56-76 (GPGL…VALV), 95-115 (IGLW…LGHS), 134-154 (VLLV…ALVV), 159-178 (IVSL…MFVA), and 182-201 (LAYV…RHWA).

Belongs to the PlsY family. Probably interacts with PlsX.

The protein localises to the cell inner membrane. The catalysed reaction is an acyl phosphate + sn-glycerol 3-phosphate = a 1-acyl-sn-glycero-3-phosphate + phosphate. It functions in the pathway lipid metabolism; phospholipid metabolism. Catalyzes the transfer of an acyl group from acyl-phosphate (acyl-PO(4)) to glycerol-3-phosphate (G3P) to form lysophosphatidic acid (LPA). This enzyme utilizes acyl-phosphate as fatty acyl donor, but not acyl-CoA or acyl-ACP. This Acaryochloris marina (strain MBIC 11017) protein is Glycerol-3-phosphate acyltransferase.